We begin with the raw amino-acid sequence, 158 residues long: Vasotocin-neurophysin VT 2 (158 aa).

Positions 1–19 (MPHSTLLLCVIGLLAFSSA) are cleaved as a signal peptide. A disulfide bond links Cys-20 and Cys-25. Gly-28 is modified (glycine amide). 7 cysteine pairs are disulfide-bonded: Cys-41-Cys-85, Cys-44-Cys-58, Cys-52-Cys-75, Cys-59-Cys-65, Cys-92-Cys-105, Cys-99-Cys-117, and Cys-106-Cys-111.

It belongs to the vasopressin/oxytocin family. Post-translationally, seven disulfide bonds are present in neurophysin.

It is found in the secreted. Its function is as follows. Vasotocin is an antidiuretic hormone. This Oncorhynchus keta (Chum salmon) protein is Vasotocin-neurophysin VT 2.